Here is a 108-residue protein sequence, read N- to C-terminus: UPF0145 protein LGAS_1099 (108 aa).

This sequence belongs to the UPF0145 family.

The sequence is that of UPF0145 protein LGAS_1099 from Lactobacillus gasseri (strain ATCC 33323 / DSM 20243 / BCRC 14619 / CIP 102991 / JCM 1131 / KCTC 3163 / NCIMB 11718 / NCTC 13722 / AM63).